Reading from the N-terminus, the 384-residue chain is Spermidine/putrescine import ATP-binding protein PotA (384 aa).

An ABC transporter domain is found at 26–260 (ISLEKVSKTY…PATRFVAGFI (235 aa)). 62 to 69 (GPSGCGKT) provides a ligand contact to ATP.

It belongs to the ABC transporter superfamily. Spermidine/putrescine importer (TC 3.A.1.11.1) family. The complex is composed of two ATP-binding proteins (PotA), two transmembrane proteins (PotB and PotC) and a solute-binding protein (PotD).

Its subcellular location is the cell membrane. The enzyme catalyses ATP + H2O + polyamine-[polyamine-binding protein]Side 1 = ADP + phosphate + polyamineSide 2 + [polyamine-binding protein]Side 1.. Part of the ABC transporter complex PotABCD involved in spermidine/putrescine import. Responsible for energy coupling to the transport system. This chain is Spermidine/putrescine import ATP-binding protein PotA, found in Thermobifida fusca (strain YX).